We begin with the raw amino-acid sequence, 293 residues long: ELMO domain-containing protein 2 (293 aa).

The region spanning Gln-126–Leu-282 is the ELMO domain.

As to expression, alveolar cells (morphologically type II cells) and alveolar macrophages (at protein level). Expressed in brain, colon, heart, kidney, liver, lung, muscle, placenta, small intestine, spleen, stomach and testis. In lung it is expressed in alveolar macrophages and alveolar walls.

Functionally, acts as a GTPase-activating protein (GAP) toward guanine nucleotide exchange factors like ARL2, ARL3, ARF1 and ARF6, but not for GTPases outside the Arf family. Regulates IFN-related antiviral responses. The protein is ELMO domain-containing protein 2 (ELMOD2) of Homo sapiens (Human).